A 350-amino-acid polypeptide reads, in one-letter code: uncharacterized protein (350 aa).

The next 3 membrane-spanning stretches (helical) occupy residues 10–30, 51–71, and 327–347; these read YSFI…EVIG, FAGI…VTLT, and ILSL…LKLF.

It belongs to the 1-acyl-sn-glycerol-3-phosphate acyltransferase family.

It is found in the endoplasmic reticulum membrane. This is an uncharacterized protein from Schizosaccharomyces pombe (strain 972 / ATCC 24843) (Fission yeast).